A 301-amino-acid chain; its full sequence is MLIHPNFDPIAIHLGPLAVRWYGLMYLVAFIAAIVVGRLRLRLPYVAAQGWTVKDIDDMLFYGVLGTILGGRLGYVLFYKASFYFAHPLDIFKVWEGGMSFHGGFLGVTLAMVLFAYQRKRSWLQVTDFVAPMVPTGLAAGRLGNFINGELWGRVTDPSSPWAMLFPGAAPDDAAWLTAHPQLAAQWHLNEVFAQYHMLPRHPSELYEIALEGVALFFVLIFFSRKPKPMGAISAVFLIGYGLARFTVEFAREPDDFLGLLAMGLSMGQWLSLPMILVGIGLLVWSYRRARHEPAQAVSVN.

A run of 3 helical transmembrane segments spans residues 17-37, 59-79, and 97-117; these read LAVR…IVVG, MLFY…VLFY, and GGMS…LFAY. An a 1,2-diacyl-sn-glycero-3-phospho-(1'-sn-glycerol)-binding site is contributed by arginine 142. The next 2 helical transmembrane spans lie at 230 to 250 and 265 to 285; these read MGAI…TVEF and LSMG…LLVW.

This sequence belongs to the Lgt family.

Its subcellular location is the cell inner membrane. It catalyses the reaction L-cysteinyl-[prolipoprotein] + a 1,2-diacyl-sn-glycero-3-phospho-(1'-sn-glycerol) = an S-1,2-diacyl-sn-glyceryl-L-cysteinyl-[prolipoprotein] + sn-glycerol 1-phosphate + H(+). It functions in the pathway protein modification; lipoprotein biosynthesis (diacylglyceryl transfer). Catalyzes the transfer of the diacylglyceryl group from phosphatidylglycerol to the sulfhydryl group of the N-terminal cysteine of a prolipoprotein, the first step in the formation of mature lipoproteins. This is Phosphatidylglycerol--prolipoprotein diacylglyceryl transferase from Paraburkholderia phytofirmans (strain DSM 17436 / LMG 22146 / PsJN) (Burkholderia phytofirmans).